We begin with the raw amino-acid sequence, 652 residues long: Forkhead box protein O1 (652 aa).

2 disordered regions span residues 1–62 and 112–154; these read MAEA…ASAS and VHPA…SSRR. Thr24 carries the phosphothreonine; by PKB/AKT1 or PKB/AKT2 and SGK1 modification. Low complexity predominate over residues 35–62; the sequence is SNSTTSSPAPSGGAAANPDAAASLASAS. The segment covering 114–133 has biased composition (pro residues); that stretch reads PAPPQPPPTGPLSQPPPVPP. The segment covering 134–146 has biased composition (low complexity); that stretch reads SAAAAAGPLAGQP. The segment at residues 156-232 is a DNA-binding region (fork-head); it reads AWGNLSYADL…VQNEGTGKSS (77 aa). DNA-binding stretches follow at residues 208–215 and 231–234; these read NSIRHNLS and SSWW. Ser209 is modified (phosphoserine; by STK4/MST1). Residues Ser215, Ser231, and Ser232 each carry the phosphoserine modification. Disordered regions lie at residues 231–342 and 383–410; these read SSWW…DVHS and SLTV…PNTS. An N6-acetyllysine mark is found at Lys242 and Lys245. Ser246 carries the phosphoserine; by CDK1 modification. Omega-N-methylarginine; by PRMT1 is present on residues Arg248 and Arg250. The Nuclear localization signal motif lies at 248–250; the sequence is RRR. Ser253 carries the post-translational modification Phosphoserine; by PKB/AKT1 and SGK1. N6-acetyllysine occurs at positions 259, 262, and 271. A compositionally biased stretch (basic residues) spans 261–272; the sequence is AKSRGRAAKKKA. The sufficient for interaction with NLK stretch occupies residues 280–562; sequence GPGDSPGSQF…TPVKTPLQVP (283 aa). Residues Ser284 and Ser295 each carry the phosphoserine modification. Polar residues predominate over residues 306-323; that stretch reads NWSTFRPRTSSNASTISG. Ser316 is subject to Phosphoserine; by PKB/AKT1 or PKB/AKT2. Ser319 is modified (phosphoserine; by CK1 and SGK1). Ser322 carries the phosphoserine; by CK1 modification. Ser326 carries the phosphoserine modification. Thr330 carries the phosphothreonine modification. The required for interaction with RUNX2 stretch occupies residues 360–456; it reads SEISNPENME…GGLNQYNCAP (97 aa). Polar residues predominate over residues 392 to 401; sequence PGSMMQQTPC. Position 420 is an N6-acetyllysine (Lys420). A Required for interaction with SIRT1 motif is present at residues 459 to 463; the sequence is LKELL.

As to quaternary structure, interacts with EP300 and CREBBP; the interactions acetylate FOXO1. Interacts with the 14-3-3 proteins, YWHAG and YWHAZ; the interactions require insulin-stimulated phosphorylation on Thr-24, promote nuclear exit and loss of transcriptional activity. Interacts with SKP2; the interaction ubiquitinates FOXO1 leading to its proteasomal degradation. Interacts with PMRT1; methylates FOXO1, prevents PKB/AKT1 phosphorylation and retains FOXO1 in the nucleus. Interacts (via an N-terminal domain) with FCOR; the interaction is direct, occurs in a forskolin-independent manner and prevents SIRT1 binding to FOXO1. Interacts (via the C-terminal half) with ATF4 (via its DNA-binding domain); the interaction occurs in osteoblasts, regulates glucose homeostasis via suppression of beta-cell proliferation and subsequent decrease in insulin production. Interacts with RUNX2; the interaction inhibits RUNX2 transcriptional activity and mediates the IGF1/insulin-dependent BGLAP expression in osteoblasts. Interacts with PPP2R1A; the interaction regulates the dephosphorylation of FOXO1 at Thr-24 and Ser-253 leading to its nuclear import. Binds to CDK1. Interacts with LRPPRC. Interacts with RUNX2; the interaction inhibits RUNX2 transcriptional activity and mediates the IGF1/insulin-dependent BGLAP expression in osteoblasts. Interacts with NLK. Interacts with SIRT1; the interaction results in the deacetylation of FOXO1 leading to activation of FOXO1-mediated transcription of genes involved in DNA repair and stress resistance. The interaction requires the presence of KRIT1 and is inhibited by FCOR. Interacts with SIRT2; the interaction is disrupted in response to oxidative stress or serum deprivation, leading to increased level of acetylated FOXO1, which promotes stress-induced autophagy by stimulating E1-like activating enzyme ATG7. Interacts (acetylated form) with ATG7; the interaction is increased in response to oxidative stress or serum deprivation and promotes the autophagic process leading to cell death. Interacts (acetylated form) with PPARG. Interacts with XBP1 isoform 2; this interaction is direct and leads to FOXO1 ubiquitination and degradation via the proteasome pathway. Interacts (via the Fork-head domain) with CEBPA; the interaction increases when FOXO1 is deacetylated. Interacts with WDFY2. Forms a complex with WDFY2 and AKT1. Interacts with CRY1. Interacts with PPIA/CYPA; the interaction promotes FOXO1 dephosphorylation, nuclear accumulation and transcriptional activity. Interacts with TOX4; FOXO1 is required for full induction of TOX4-dependent activity and the interaction is inhibited by insulin. Interacts (when phosphorylated on Ser-253) with STUB1/CHIP. In terms of processing, phosphorylation by NLK promotes nuclear export and inhibits the transcriptional activity. In response to growth factors, phosphorylation on Thr-24, Ser-253 and Ser-319 by PKB/AKT1 promotes nuclear export and inactivation of transactivational activity. Phosphorylation on Thr-24 is required for binding 14-3-3 proteins. Phosphorylation of Ser-253 decreases DNA-binding activity and promotes the phosphorylation of Thr-24 and Ser-316, permitting phosphorylation of Ser-319 and Ser-322, probably by CDK1, leading to nuclear exclusion and loss of function. Stress signals, such as response to oxygen or nitric oxide, attenuate the PKB/AKT1-mediated phosphorylation leading to nuclear retention. Phosphorylation of Ser-326 is independent of IGF1 and leads to reduced function. Dephosphorylated on Thr-24 and Ser-253 by PP2A in beta-cells under oxidative stress leading to nuclear retention. Phosphorylation of Ser-246 by CDK1 disrupts binding of 14-3-3 proteins leading to nuclear accumulation and has no effect on DNA-binding nor transcriptional activity. Phosphorylation by STK4/MST1 on Ser-209, upon oxidative stress, inhibits binding to 14-3-3 proteins and nuclear export. PPIA/CYPA promotes its dephosphorylation on Ser-253. Ubiquitinated by SKP2. Ubiquitinated, leading to proteasomal degradation. Ubiquitinated by STUB1/CHIP; when Ser-253 is phosphorylated. Post-translationally, methylation inhibits PKB/AKT1-mediated phosphorylation at Ser-253, promoting nuclear retention and increasing the transcriptional activity and cell death. Methylation increased by oxidative stress. In terms of processing, acetylation at Lys-259 and Lys-271 are necessary for autophagic cell death induction. Deacetylated by SIRT2 in response to oxidative stress or serum deprivation, thereby negatively regulating FOXO1-mediated autophagic cell death. Once in the nucleus, acetylated by CREBBP/EP300. Acetylation diminishes the interaction with target DNA and attenuates the transcriptional activity. It increases the phosphorylation at Ser-253, and is required for the transcriptional inhibition by FCOR. Deacetylation by SIRT1 results in reactivation of the transcriptional activity. Acetylation of FOXO1 diminishes its binding to PPARG in adipocytes. Deacetylated by SIRT2; deacetylation of FOXO1 directly increases its repressive binding to PPARG and inhibits adipocyte differentiation. Oxidative stress by hydrogen peroxide treatment appears to promote deacetylation and uncoupling of insulin-induced phosphorylation. By contrast, resveratrol acts independently of acetylation. Acetylated at Lys-420, promoting its localization to the nucleus and transcription factor activity. Deacetylation at Lys-420 by SIRT6, promotes its translocation into the cytoplasm, preventing its transcription factor activity. Deacetylation and subsequent inhibition by SIRT6 has different effects depending on cell types: it inhibits gluconeogenesis in hepatocytes, promotes glucose sensing in pancreatic beta-cells and regulates lipid catabolism in brown adipocytes. Expressed in liver, white and brown adipose tissues (at protein level).

The protein resides in the cytoplasm. Its subcellular location is the nucleus. In terms of biological role, transcription factor that is the main target of insulin signaling and regulates metabolic homeostasis in response to oxidative stress. Binds to the insulin response element (IRE) with consensus sequence 5'-TT[G/A]TTTTG-3' and the related Daf-16 family binding element (DBE) with consensus sequence 5'-TT[G/A]TTTAC-3'. Activity suppressed by insulin. Main regulator of redox balance and osteoblast numbers and controls bone mass. Orchestrates the endocrine function of the skeleton in regulating glucose metabolism. Also acts as a key regulator of chondrogenic commitment of skeletal progenitor cells in response to lipid availability: when lipids levels are low, translocates to the nucleus and promotes expression of SOX9, which induces chondrogenic commitment and suppresses fatty acid oxidation. Acts synergistically with ATF4 to suppress osteocalcin/BGLAP activity, increasing glucose levels and triggering glucose intolerance and insulin insensitivity. Also suppresses the transcriptional activity of RUNX2, an upstream activator of osteocalcin/BGLAP. Acts as an inhibitor of glucose sensing in pancreatic beta cells by acting as a transcription repressor and suppressing expression of PDX1. In hepatocytes, promotes gluconeogenesis by acting together with PPARGC1A and CEBPA to activate the expression of genes such as IGFBP1, G6PC1 and PCK1. Also promotes gluconeogenesis by directly promoting expression of PPARGC1A and G6PC1. Important regulator of cell death acting downstream of CDK1, PKB/AKT1 and STK4/MST1. Promotes neural cell death. Mediates insulin action on adipose tissue. Regulates the expression of adipogenic genes such as PPARG during preadipocyte differentiation and, adipocyte size and adipose tissue-specific gene expression in response to excessive calorie intake. Regulates the transcriptional activity of GADD45A and repair of nitric oxide-damaged DNA in beta-cells. Required for the autophagic cell death induction in response to starvation or oxidative stress in a transcription-independent manner. Mediates the function of MLIP in cardiomyocytes hypertrophy and cardiac remodeling. Positive regulator of apoptosis in cardiac smooth muscle cells as a result of its transcriptional activation of pro-apoptotic genes. Regulates endothelial cell (EC) viability and apoptosis in a PPIA/CYPA-dependent manner via transcription of CCL2 and BCL2L11 which are involved in EC chemotaxis and apoptosis. The chain is Forkhead box protein O1 (Foxo1) from Mus musculus (Mouse).